The chain runs to 180 residues: Endoribonuclease YbeY (180 aa).

Positions 118, 122, and 128 each coordinate Zn(2+).

This sequence belongs to the endoribonuclease YbeY family. It depends on Zn(2+) as a cofactor.

The protein resides in the cytoplasm. Functionally, single strand-specific metallo-endoribonuclease involved in late-stage 70S ribosome quality control and in maturation of the 3' terminus of the 16S rRNA. The chain is Endoribonuclease YbeY from Rhodococcus opacus (strain B4).